A 260-amino-acid chain; its full sequence is 4-hydroxy-tetrahydrodipicolinate reductase (260 aa).

NAD(+) is bound by residues Gly-8–Met-13, Glu-35, Gly-91–Thr-93, and Ala-115–Met-118. His-148 (proton donor/acceptor) is an active-site residue. His-149 contributes to the (S)-2,3,4,5-tetrahydrodipicolinate binding site. Lys-152 serves as the catalytic Proton donor. Gly-158 to Thr-159 lines the (S)-2,3,4,5-tetrahydrodipicolinate pocket.

The protein belongs to the DapB family.

The protein localises to the cytoplasm. It carries out the reaction (S)-2,3,4,5-tetrahydrodipicolinate + NAD(+) + H2O = (2S,4S)-4-hydroxy-2,3,4,5-tetrahydrodipicolinate + NADH + H(+). The enzyme catalyses (S)-2,3,4,5-tetrahydrodipicolinate + NADP(+) + H2O = (2S,4S)-4-hydroxy-2,3,4,5-tetrahydrodipicolinate + NADPH + H(+). It functions in the pathway amino-acid biosynthesis; L-lysine biosynthesis via DAP pathway; (S)-tetrahydrodipicolinate from L-aspartate: step 4/4. In terms of biological role, catalyzes the conversion of 4-hydroxy-tetrahydrodipicolinate (HTPA) to tetrahydrodipicolinate. The polypeptide is 4-hydroxy-tetrahydrodipicolinate reductase (Rubrobacter xylanophilus (strain DSM 9941 / JCM 11954 / NBRC 16129 / PRD-1)).